The primary structure comprises 139 residues: Large-conductance mechanosensitive channel (139 aa).

Transmembrane regions (helical) follow at residues 17-37 and 88-108; these read VVDMAVGVIIGGAFGKIVTSL and TVDFLILAFVIFLMIKAIMAA.

It belongs to the MscL family. As to quaternary structure, homopentamer.

It localises to the cell inner membrane. In terms of biological role, channel that opens in response to stretch forces in the membrane lipid bilayer. May participate in the regulation of osmotic pressure changes within the cell. The protein is Large-conductance mechanosensitive channel of Porphyromonas gingivalis (strain ATCC 33277 / DSM 20709 / CIP 103683 / JCM 12257 / NCTC 11834 / 2561).